Consider the following 306-residue polypeptide: Dermonecrotic toxin LiSicTox-alphaIA1a (306 aa).

Residues 1-18 form the signal peptide; the sequence is MLPYIVLVLGCWSVLSQA. Residues 19–26 constitute a propeptide that is removed on maturation; sequence AQTDDEER. Histidine 38 is an active-site residue. 2 residues coordinate Mg(2+): glutamate 58 and aspartate 60. The Nucleophile role is filled by histidine 74. Cystine bridges form between cysteine 78/cysteine 84 and cysteine 80/cysteine 223. Aspartate 118 contributes to the Mg(2+) binding site.

It belongs to the arthropod phospholipase D family. Class II subfamily. Class IIa sub-subfamily. Mg(2+) is required as a cofactor. Expressed by the venom gland.

It is found in the secreted. It catalyses the reaction an N-(acyl)-sphingosylphosphocholine = an N-(acyl)-sphingosyl-1,3-cyclic phosphate + choline. It carries out the reaction an N-(acyl)-sphingosylphosphoethanolamine = an N-(acyl)-sphingosyl-1,3-cyclic phosphate + ethanolamine. The catalysed reaction is a 1-acyl-sn-glycero-3-phosphocholine = a 1-acyl-sn-glycero-2,3-cyclic phosphate + choline. The enzyme catalyses a 1-acyl-sn-glycero-3-phosphoethanolamine = a 1-acyl-sn-glycero-2,3-cyclic phosphate + ethanolamine. It catalyses the reaction 1-hexadecanoyl-sn-glycero-3-phosphocholine = 1-hexadecanoyl-sn-glycero-2,3-cyclic phosphate + choline. Its activity is regulated as follows. Catalytic activity and hemolysis are inhibited by divalent ion chelators (1,10-phenanthroline, EDTA, and EGTA). In terms of biological role, dermonecrotic toxins cleave the phosphodiester linkage between the phosphate and headgroup of certain phospholipids (sphingolipid and lysolipid substrates), forming an alcohol (often choline) and a cyclic phosphate. This toxin acts on sphingomyelin (SM) with high activity. It discriminate between the number of carbon atoms in the substrates, since it prefers SM with six carbons in the fatty acid chain (SM6:0) to other SMs (SM12:0 &gt; SM16:0 &gt; SM18:0 &gt; SM2:0 &gt; SM24:0). It also acts on lysophosphatidylcholine (LPC) (LPC16:0 = LPC12:0 &gt; LPC18:0), and lyso-platelet activating factor (LPAF, an alkyl-LPC) but not on phosphatidylcholine (PC). It may also act on ceramide phosphoethanolamine (CPE), lysophosphatidylcholine (LPC) and lysophosphatidylethanolamine (LPE), but not on lysophosphatidylserine (LPS), and lysophosphatidylglycerol (LPG). It acts by transphosphatidylation, releasing exclusively cyclic phosphate products as second products. In vivo, it induces dermonecrosis, vascular permeability, platelet aggregation, inflammatory response, edema and cytotoxicity against renal epithelial cells. It causes direct nephrotoxicity and is directly toxic to liver. It also induces hemolysis in a complement-dependent manner as well as in a complement-independent manner. The hemolysis provoked in a complement-independent manner is composed of several steps. The toxin binds to erythrocyte membranes, hydrolyzes membrane phospholipids (SM and LPC) thus generating metabolism products that cause hemolysis, probably by provoking an increase of calcium inside cells. The calcium influx is due to the opening of L-type calcium channels, since L-type calcium channel blockers inhibit calcium influx. Is lethal to mice when intraperitoneally injected. This Loxosceles intermedia (Brown spider) protein is Dermonecrotic toxin LiSicTox-alphaIA1a.